We begin with the raw amino-acid sequence, 280 residues long: Lysosome-associated membrane glycoprotein 5 (280 aa).

Residues 1–29 (MDLRRRALLGVDGLRVLLMLFHTVTRIMA) form the signal peptide. Over 30–235 (EQEVENLSGL…PVDEREQLEE (206 aa)) the chain is Extracellular. Asn-35 and Asn-53 each carry an N-linked (GlcNAc...) asparagine glycan. A helical transmembrane segment spans residues 236–256 (TLPLILGLILGLVIVVTLVIY). The Cytoplasmic portion of the chain corresponds to 257 to 280 (HIHHKMTANQVQIPRDRSQYKHMG).

The protein belongs to the LAMP family. In terms of processing, glycosylated.

The protein localises to the cytoplasmic vesicle membrane. It is found in the cell membrane. The protein resides in the cell projection. Its subcellular location is the dendrite. It localises to the cytoplasmic vesicle. The protein localises to the secretory vesicle. It is found in the synaptic vesicle membrane. The protein resides in the growth cone membrane. Its subcellular location is the early endosome membrane. It localises to the recycling endosome. The protein localises to the endoplasmic reticulum-Golgi intermediate compartment membrane. It is found in the endosome membrane. In terms of biological role, plays a role in short-term synaptic plasticity in a subset of GABAergic neurons in the brain. The sequence is that of Lysosome-associated membrane glycoprotein 5 (LAMP5) from Bos taurus (Bovine).